The chain runs to 74 residues: uncharacterized protein (74 aa).

The helical transmembrane segment at 8-30 (LAAAVSSSAASAGVSRIAASAMA) threads the bilayer.

It localises to the mitochondrion outer membrane. This is an uncharacterized protein from Saccharomyces cerevisiae (strain ATCC 204508 / S288c) (Baker's yeast).